We begin with the raw amino-acid sequence, 383 residues long: Probable mannan endo-1,4-beta-mannosidase A (383 aa).

Residues 1-21 form the signal peptide; the sequence is MKLSNALLTLASLALANVSTA. An N-linked (GlcNAc...) asparagine glycan is attached at asparagine 17. A substrate-binding site is contributed by tryptophan 92. N-linked (GlcNAc...) asparagine glycosylation occurs at asparagine 194. Residue asparagine 205 participates in substrate binding. Glutamate 206 (proton donor) is an active-site residue. A glycan (N-linked (GlcNAc...) asparagine) is linked at asparagine 263. Position 281 (tyrosine 281) interacts with substrate. The active-site Nucleophile is the glutamate 314. Residue tryptophan 344 participates in substrate binding.

This sequence belongs to the glycosyl hydrolase 5 (cellulase A) family.

The protein localises to the secreted. It catalyses the reaction Random hydrolysis of (1-&gt;4)-beta-D-mannosidic linkages in mannans, galactomannans and glucomannans.. Functionally, endo-1,4-mannanase, a crucial enzyme for depolymerization of seed galactomannans and wood galactoglucomannans. This chain is Probable mannan endo-1,4-beta-mannosidase A (manA), found in Aspergillus niger (strain ATCC MYA-4892 / CBS 513.88 / FGSC A1513).